Consider the following 1521-residue polypeptide: Protein dispatched homolog 1 (1521 aa).

The span at 1–10 (MAVISGSDSV) shows a compositional bias: polar residues. The disordered stretch occupies residues 1–55 (MAVISGSDSVLLSNGSISTSTSNPSPLSPSDGDLPAQHLGPRETPRTKASPNGCL). The span at 11–35 (LLSNGSISTSTSNPSPLSPSDGDLP) shows a compositional bias: low complexity. N-linked (GlcNAc...) asparagine glycans are attached at residues N14 and N58. The helical transmembrane segment at 189-209 (VVVLGMCTLLIVVCALVGVLV) threads the bilayer. N390 carries an N-linked (GlcNAc...) asparagine glycan. An SSD domain is found at 485–657 (GIEFGIKHSL…VTWLPAVIVL (173 aa)). Transmembrane regions (helical) follow at residues 499-519 (LLMD…IMCV), 524-544 (MFIT…SYFL), and 548-568 (VFNF…LVGI). The N-linked (GlcNAc...) asparagine glycan is linked to N581. The next 8 membrane-spanning stretches (helical) occupy residues 603–623 (AALS…ANYV), 637–657 (GTAI…VIVL), 717–737 (YLWL…VCVN), 986–1006 (MGLS…NIII), 1008–1028 (LYAI…LVLL), 1038–1058 (VTIS…GVAY), 1081–1101 (IAMA…STVL), and 1109–1129 (FMML…QCLC). 2 stretches are compositionally biased toward polar residues: residues 1355–1364 (QENLGRTSTH) and 1418–1428 (TKSKVSGLPNQ). Positions 1355 to 1440 (QENLGRTSTH…KEEKQVEPSL (86 aa)) are disordered. A glycan (N-linked (GlcNAc...) asparagine) is linked at N1455.

The protein belongs to the dispatched family. As to quaternary structure, interacts with SHH; via the cholesterol anchor of the dually lipid-modified SHH (ShhNp).

Its subcellular location is the membrane. In terms of biological role, functions in hedgehog (Hh) signaling. Regulates the release and extracellular accumulation of cholesterol-modified hedgehog proteins and is hence required for effective production of the Hh signal. Synergizes with SCUBE2 to cause an increase in SHH secretion. The polypeptide is Protein dispatched homolog 1 (Disp1) (Mus musculus (Mouse)).